We begin with the raw amino-acid sequence, 322 residues long: L-asparaginase (322 aa).

In terms of domain architecture, Asparaginase/glutaminase spans 3–322 (KKVALITTGG…KEGIKDKFCY (320 aa)). Residue Thr13 is the O-isoaspartyl threonine intermediate of the active site. Residues Ser56 and 89-90 (TD) each bind substrate.

This sequence belongs to the asparaginase 1 family. Homotetramer.

It is found in the cytoplasm. The catalysed reaction is L-asparagine + H2O = L-aspartate + NH4(+). The polypeptide is L-asparaginase (ansA) (Bacillus licheniformis).